A 550-amino-acid polypeptide reads, in one-letter code: Acidic amino acid decarboxylase GADL1 (550 aa).

The residue at position 362 (K362) is an N6-(pyridoxal phosphate)lysine.

The protein belongs to the group II decarboxylase family. Homodimer. The cofactor is pyridoxal 5'-phosphate. Expressed in skeletal muscles and kidney (at protein level). Expressed in skeletal muscle and weakly in brain. Not expressed in liver or kidney. Expressed in brain, olfactory bulb, liver, muscle and kidney with the highest expression in olfactory bulb and almost not detected in liver (at protein level).

The enzyme catalyses L-aspartate + H(+) = beta-alanine + CO2. It catalyses the reaction 3-sulfino-L-alanine + H(+) = hypotaurine + CO2. It carries out the reaction L-cysteate + H(+) = taurine + CO2. With respect to regulation, activated weakly by 0.2-0.4 mM Li(+). Inhibited by bis-carboxymethyl-trithiocarbonate, ethylxanthogenacetic acid and 2,5-disulfoaniline. Its function is as follows. Catalyzes the decarboxylation of L-aspartate, 3-sulfino-L-alanine (cysteine sulfinic acid), and L-cysteate to beta-alanine, hypotaurine and taurine, respectively. The preferred substrate is L-aspartate. Does not exhibit any decarboxylation activity toward glutamate. The polypeptide is Acidic amino acid decarboxylase GADL1 (Mus musculus (Mouse)).